The primary structure comprises 315 residues: Methionyl-tRNA formyltransferase (315 aa).

Residue 113-116 (SLLP) coordinates (6S)-5,6,7,8-tetrahydrofolate.

It belongs to the Fmt family.

The catalysed reaction is L-methionyl-tRNA(fMet) + (6R)-10-formyltetrahydrofolate = N-formyl-L-methionyl-tRNA(fMet) + (6S)-5,6,7,8-tetrahydrofolate + H(+). Its function is as follows. Attaches a formyl group to the free amino group of methionyl-tRNA(fMet). The formyl group appears to play a dual role in the initiator identity of N-formylmethionyl-tRNA by promoting its recognition by IF2 and preventing the misappropriation of this tRNA by the elongation apparatus. The polypeptide is Methionyl-tRNA formyltransferase (Pseudoalteromonas atlantica (strain T6c / ATCC BAA-1087)).